A 1154-amino-acid chain; its full sequence is DNA-directed RNA polymerase subunit beta' (1154 aa).

Zn(2+) contacts are provided by Cys-60, Cys-62, Cys-75, and Cys-78. The Mg(2+) site is built by Asp-449, Asp-451, and Asp-453. Cys-774, Cys-848, Cys-855, and Cys-858 together coordinate Zn(2+).

It belongs to the RNA polymerase beta' chain family. As to quaternary structure, the RNAP catalytic core consists of 2 alpha, 1 beta, 1 beta' and 1 omega subunit. When a sigma factor is associated with the core the holoenzyme is formed, which can initiate transcription. Requires Mg(2+) as cofactor. The cofactor is Zn(2+).

It catalyses the reaction RNA(n) + a ribonucleoside 5'-triphosphate = RNA(n+1) + diphosphate. Its function is as follows. DNA-dependent RNA polymerase catalyzes the transcription of DNA into RNA using the four ribonucleoside triphosphates as substrates. This chain is DNA-directed RNA polymerase subunit beta', found in Desulforudis audaxviator (strain MP104C).